The following is a 312-amino-acid chain: Atrochrysone carboxyl ACP thioesterase AacuM (312 aa).

4 residues coordinate Zn(2+): histidine 103, histidine 105, aspartate 107, and histidine 108. The active-site Proton donor/acceptor is aspartate 107.

The protein belongs to the metallo-beta-lactamase superfamily. The cofactor is Zn(2+).

It carries out the reaction atrochrysone carboxyl-[ACP] + H2O = atrochrysone carboxylate + holo-[ACP] + H(+). It functions in the pathway secondary metabolite biosynthesis. In terms of biological role, atrochrysone carboxyl ACP thioesterase; part of the gene cluster that mediates the biosynthesis of the tetrahydroxanthone dimer secalonic acid D. The pathway begins with the synthesis of atrochrysone thioester by the polyketide synthase AacuL. The atrochrysone carboxyl ACP thioesterase AacuM then breaks the thioester bond and releases the atrochrysone carboxylic acid from AacuL. Atrochrysone carboxylic acid is decarboxylated by the decarboxylase AacuI, and oxidized by the anthrone oxygenase AacuG to yield emodin. Emodin is then reduced to emodin hydroquinone by a yet unidentified oxidoreductase. A-ring reduction by the short chain dehydrogenase AacuN, dehydration by the scytalone dehydratase-like protein AacuK and probable spontaneous re-oxidation, results in overall deoxygenation to chrysophanol. Baeyer-Villiger oxidation by the Baeyer-Villiger monooxygenase (BVMO) AacuH then yields monodictyphenone. Monodictyphenone is transformed into compounds with the tetrahydroxanthone skeleton via methylesterification by the methyltransferase AacuQ, followed by the action of the flavin-dependent monooxygenase AacuC, the isomerase AacuP, and the short chain dehydrogenase/reductase AacuF or AacuD. AacuF and AacuD should accept the same compound as a substrate but perform the ketoreduction with a different stereoselectivity, thus yielding blennolides B and A, respectively. In the final step of the biosynthesis, the cytochrome P450 monooxygenase AacuE accepts blennolide B and/or blennolide A to conduct the dimerization reaction to furnish the tetrahydroxanthone dimers, secalonic acids D, B, and F. This Aspergillus aculeatus (strain ATCC 16872 / CBS 172.66 / WB 5094) protein is Atrochrysone carboxyl ACP thioesterase AacuM.